Consider the following 228-residue polypeptide: Superoxide dismutase [Mn], mitochondrial (228 aa).

A mitochondrion-targeting transit peptide spans 1–24 (MALRTLVSRRTLATGLGFRQQLRG). Mn(2+)-binding residues include His52, His100, Asp189, and His193.

Belongs to the iron/manganese superoxide dismutase family. In terms of assembly, homotetramer. It depends on Mn(2+) as a cofactor. As to expression, expressed most abundantly in parts of the plant which exhibit a high metabolic activity. Expressed in pre-shooting flower buds, vegetative buds, immature fruits and fully expanded leaves of basal shoots and seedlings.

Its subcellular location is the mitochondrion matrix. The catalysed reaction is 2 superoxide + 2 H(+) = H2O2 + O2. Functionally, destroys superoxide anion radicals which are normally produced within the cells and which are toxic to biological systems. This Prunus persica (Peach) protein is Superoxide dismutase [Mn], mitochondrial (SOD).